We begin with the raw amino-acid sequence, 366 residues long: 3-dehydroquinate synthase (366 aa).

Residues 69-74, 103-107, 127-128, Lys-140, and Lys-149 each bind NAD(+); these read DGEAFK, GVIGD, and TT. Positions 182, 245, and 262 each coordinate Zn(2+).

This sequence belongs to the sugar phosphate cyclases superfamily. Dehydroquinate synthase family. The cofactor is Co(2+). Zn(2+) is required as a cofactor. It depends on NAD(+) as a cofactor.

The protein resides in the cytoplasm. It catalyses the reaction 7-phospho-2-dehydro-3-deoxy-D-arabino-heptonate = 3-dehydroquinate + phosphate. It participates in metabolic intermediate biosynthesis; chorismate biosynthesis; chorismate from D-erythrose 4-phosphate and phosphoenolpyruvate: step 2/7. Functionally, catalyzes the conversion of 3-deoxy-D-arabino-heptulosonate 7-phosphate (DAHP) to dehydroquinate (DHQ). The sequence is that of 3-dehydroquinate synthase from Pseudomonas fluorescens (strain Pf0-1).